Here is a 440-residue protein sequence, read N- to C-terminus: Tol-Pal system protein TolB (440 aa).

Residues 1-28 form the signal peptide; it reads MVMTRRIFFSWFIVICSLWLSSFSSVHA. Residues 417 to 440 form a disordered region; that stretch reads RNERQLPTPNDASDPAWSPLLNMQ.

The protein belongs to the TolB family. The Tol-Pal system is composed of five core proteins: the inner membrane proteins TolA, TolQ and TolR, the periplasmic protein TolB and the outer membrane protein Pal. They form a network linking the inner and outer membranes and the peptidoglycan layer.

The protein localises to the periplasm. Part of the Tol-Pal system, which plays a role in outer membrane invagination during cell division and is important for maintaining outer membrane integrity. This is Tol-Pal system protein TolB from Bartonella quintana (strain Toulouse) (Rochalimaea quintana).